Reading from the N-terminus, the 322-residue chain is DNA repair and recombination protein RadA (322 aa).

105–112 (GMYGSGKT) lines the ATP pocket.

The protein belongs to the eukaryotic RecA-like protein family.

Involved in DNA repair and in homologous recombination. Binds and assemble on single-stranded DNA to form a nucleoprotein filament. Hydrolyzes ATP in a ssDNA-dependent manner and promotes DNA strand exchange between homologous DNA molecules. This chain is DNA repair and recombination protein RadA, found in Methanococcus maripaludis (strain C5 / ATCC BAA-1333).